Reading from the N-terminus, the 219-residue chain is 7-cyano-7-deazaguanine synthase (219 aa).

Position 9 to 19 (Tyr-9 to Leu-19) interacts with ATP. Residues Cys-185, Cys-193, Cys-196, and Cys-199 each coordinate Zn(2+).

It belongs to the QueC family. Zn(2+) serves as cofactor.

The catalysed reaction is 7-carboxy-7-deazaguanine + NH4(+) + ATP = 7-cyano-7-deazaguanine + ADP + phosphate + H2O + H(+). It participates in purine metabolism; 7-cyano-7-deazaguanine biosynthesis. Catalyzes the ATP-dependent conversion of 7-carboxy-7-deazaguanine (CDG) to 7-cyano-7-deazaguanine (preQ(0)). This chain is 7-cyano-7-deazaguanine synthase, found in Marinomonas sp. (strain MWYL1).